The primary structure comprises 120 residues: NAD(P)H-quinone oxidoreductase subunit 3, chloroplastic (120 aa).

A run of 3 helical transmembrane segments spans residues Ile-9–Gly-29, Met-64–Met-84, and Val-88–Ser-108.

It belongs to the complex I subunit 3 family. As to quaternary structure, NDH is composed of at least 16 different subunits, 5 of which are encoded in the nucleus.

Its subcellular location is the plastid. The protein localises to the chloroplast thylakoid membrane. It catalyses the reaction a plastoquinone + NADH + (n+1) H(+)(in) = a plastoquinol + NAD(+) + n H(+)(out). The enzyme catalyses a plastoquinone + NADPH + (n+1) H(+)(in) = a plastoquinol + NADP(+) + n H(+)(out). Its function is as follows. NDH shuttles electrons from NAD(P)H:plastoquinone, via FMN and iron-sulfur (Fe-S) centers, to quinones in the photosynthetic chain and possibly in a chloroplast respiratory chain. The immediate electron acceptor for the enzyme in this species is believed to be plastoquinone. Couples the redox reaction to proton translocation, and thus conserves the redox energy in a proton gradient. The polypeptide is NAD(P)H-quinone oxidoreductase subunit 3, chloroplastic (Glycine max (Soybean)).